The sequence spans 286 residues: Mitochondrial dicarboxylate carrier (286 aa).

Solcar repeat units follow at residues 7–87 (SRWY…MRDY), 100–187 (SKVL…AKQL), and 196–279 (DNIF…LRKH). 3 helical membrane-spanning segments follow: residues 9–29 (WYFG…LDLL), 62–81 (GLSA…FAIY), and 102–122 (VLLG…ADLV). The residue at position 158 (Lys-158) is an N6-acetyllysine. Transmembrane regions (helical) follow at residues 162-181 (GATM…LSCY), 202-222 (FLSS…LDVL), and 254-274 (GLVP…MFLE).

This sequence belongs to the mitochondrial carrier (TC 2.A.29) family. In terms of tissue distribution, expressed most strongly in liver, then kidney, and at lower levels in heart and brain.

The protein resides in the mitochondrion inner membrane. The enzyme catalyses (S)-malate(in) + phosphate(out) = (S)-malate(out) + phosphate(in). It carries out the reaction malonate(out) + (S)-malate(in) = malonate(in) + (S)-malate(out). It catalyses the reaction (S)-malate(in) + succinate(out) = (S)-malate(out) + succinate(in). The catalysed reaction is (S)-malate(in) + sulfate(out) = (S)-malate(out) + sulfate(in). The enzyme catalyses malonate(out) + phosphate(in) = malonate(in) + phosphate(out). It carries out the reaction succinate(out) + phosphate(in) = succinate(in) + phosphate(out). It catalyses the reaction sulfate(out) + phosphate(in) = sulfate(in) + phosphate(out). The catalysed reaction is malonate(out) + succinate(in) = malonate(in) + succinate(out). Catalyzes the electroneutral exchange or flux of physiologically important metabolites such as dicarboxylates (malonate, malate, succinate), inorganic sulfur-containing anions, and phosphate, across mitochondrial inner membrane. Plays an important role in gluconeogenesis, fatty acid metabolism, urea synthesis, and sulfur metabolism, particularly in liver, by supplying the substrates for the different metabolic processes. Regulates fatty acid release from adipocytes, and contributes to systemic insulin sensitivity. The chain is Mitochondrial dicarboxylate carrier from Rattus norvegicus (Rat).